A 465-amino-acid chain; its full sequence is UDP-N-acetylmuramate--L-alanine ligase (465 aa).

Position 115 to 121 (115 to 121 (GTHGKTT)) interacts with ATP.

This sequence belongs to the MurCDEF family.

The protein resides in the cytoplasm. It catalyses the reaction UDP-N-acetyl-alpha-D-muramate + L-alanine + ATP = UDP-N-acetyl-alpha-D-muramoyl-L-alanine + ADP + phosphate + H(+). The protein operates within cell wall biogenesis; peptidoglycan biosynthesis. Functionally, cell wall formation. The sequence is that of UDP-N-acetylmuramate--L-alanine ligase from Renibacterium salmoninarum (strain ATCC 33209 / DSM 20767 / JCM 11484 / NBRC 15589 / NCIMB 2235).